The primary structure comprises 123 residues: Small ribosomal subunit protein uS13 (123 aa).

Residues 93 to 123 (HRKGLPVRGQNTKNNARTRKGPAKAIAGKKK) are disordered. Over residues 108-123 (ARTRKGPAKAIAGKKK) the composition is skewed to basic residues.

This sequence belongs to the universal ribosomal protein uS13 family. As to quaternary structure, part of the 30S ribosomal subunit. Forms a loose heterodimer with protein S19. Forms two bridges to the 50S subunit in the 70S ribosome.

Located at the top of the head of the 30S subunit, it contacts several helices of the 16S rRNA. In the 70S ribosome it contacts the 23S rRNA (bridge B1a) and protein L5 of the 50S subunit (bridge B1b), connecting the 2 subunits; these bridges are implicated in subunit movement. Contacts the tRNAs in the A and P-sites. The polypeptide is Small ribosomal subunit protein uS13 (Leuconostoc mesenteroides subsp. mesenteroides (strain ATCC 8293 / DSM 20343 / BCRC 11652 / CCM 1803 / JCM 6124 / NCDO 523 / NBRC 100496 / NCIMB 8023 / NCTC 12954 / NRRL B-1118 / 37Y)).